We begin with the raw amino-acid sequence, 339 residues long: 2-oxoisovalerate dehydrogenase subunit beta (339 aa).

In terms of assembly, heterodimer of an alpha and a beta chain. Thiamine diphosphate is required as a cofactor.

The catalysed reaction is N(6)-[(R)-lipoyl]-L-lysyl-[protein] + 3-methyl-2-oxobutanoate + H(+) = N(6)-[(R)-S(8)-2-methylpropanoyldihydrolipoyl]-L-lysyl-[protein] + CO2. The branched-chain alpha-keto dehydrogenase complex catalyzes the overall conversion of alpha-keto acids to acyl-CoA and CO(2). It contains multiple copies of three enzymatic components: branched-chain alpha-keto acid decarboxylase (E1), lipoamide acyltransferase (E2) and lipoamide dehydrogenase (E3). In Pseudomonas putida (Arthrobacter siderocapsulatus), this protein is 2-oxoisovalerate dehydrogenase subunit beta (bkdA2).